A 28-amino-acid polypeptide reads, in one-letter code: U-actitoxin-Ate1 (28 aa).

Residues methionine 1 to serine 15 form the signal peptide. A disulfide bond links cysteine 20 and cysteine 26.

As to quaternary structure, monomer in solution. May be N-glycosylated at Asn-22. Activity with this modification has not be tested. As to expression, highly expressed in the tentacles. Weakly expressed in acrorhagi and mesenteric filaments.

It localises to the secreted. The protein resides in the nematocyst. Probable toxin expected to be employed in prey capture and/or defense against predators (based on its abundance in tentacles). Has only a weak affinity for lipid membranes. Shows moderate cytotoxic activity against breast cancer cell lines (MCF-7 and MDA-MB-231). This chain is U-actitoxin-Ate1, found in Actinia tenebrosa (Australian red waratah sea anemone).